A 471-amino-acid polypeptide reads, in one-letter code: Trigger factor (471 aa).

Positions 169-254 (EDRVTIDYLG…VKEVAKPNEL (86 aa)) constitute a PPIase FKBP-type domain. Positions 435–471 (VSKEELTAEDEDAASEAKPAKKAAAKKKAEEGKSEEA) are disordered. A compositionally biased stretch (basic and acidic residues) spans 461–471 (KKAEEGKSEEA).

It belongs to the FKBP-type PPIase family. Tig subfamily.

The protein resides in the cytoplasm. The catalysed reaction is [protein]-peptidylproline (omega=180) = [protein]-peptidylproline (omega=0). Functionally, involved in protein export. Acts as a chaperone by maintaining the newly synthesized protein in an open conformation. Functions as a peptidyl-prolyl cis-trans isomerase. This Brucella abortus (strain S19) protein is Trigger factor.